A 766-amino-acid polypeptide reads, in one-letter code: Nucleolar complex protein 2 (766 aa).

The span at 1 to 12 (MKLATKKIKTLG) shows a compositional bias: basic residues. Disordered stretches follow at residues 1–73 (MKLA…EELE), 100–154 (DTDD…DEED), and 674–766 (KTGV…LNEW). Residues 14–29 (SKPDLSKKKPAKDAIR) are compositionally biased toward basic and acidic residues. The segment covering 33 to 42 (PQTTSETKVT) has biased composition (polar residues). A compositionally biased stretch (basic residues) spans 58-67 (KTTKKGFKKS). A compositionally biased stretch (acidic residues) spans 100-115 (DTDDDDDEEGDEEDKE). A Phosphothreonine modification is found at threonine 101. Positions 130-140 (EKYHKPSKDLE) are enriched in basic and acidic residues. Positions 141-154 (VASDESDFEVDEED) are enriched in acidic residues. Phosphoserine is present on residues serine 143, serine 146, serine 691, serine 693, and serine 705. The span at 706–720 (DDDDDEDVQEEEEVE) shows a compositional bias: acidic residues. Residues 757 to 766 (IVKDLDLNEW) show a composition bias toward basic and acidic residues.

This sequence belongs to the NOC2 family.

It is found in the nucleus. This is Nucleolar complex protein 2 from Drosophila melanogaster (Fruit fly).